The sequence spans 183 residues: Transmembrane and coiled-coil domain-containing protein 2 (183 aa).

Residues 54-74 (VQIILGISFLTLLAIGLFALW) form a helical membrane-spanning segment. A coiled-coil region spans residues 127–150 (GLQEKILKKLQMVENKVRDLEGII).

The protein resides in the membrane. The sequence is that of Transmembrane and coiled-coil domain-containing protein 2 (Tmco2) from Mus musculus (Mouse).